A 1031-amino-acid polypeptide reads, in one-letter code: Toll-like receptor 9 (1031 aa).

A signal peptide spans 1–25 (MGPCHGALHPLSLLVQAAALAVALA). Residues 26–817 (QGTLPAFLPC…LCLDEALSWD (792 aa)) lie on the Extracellular side of the membrane. A disulfide bond links cysteine 35 and cysteine 45. 47–51 (WLFLK) contributes to the DNA binding site. LRR repeat units follow at residues 62-85 (RGNV…DFVH), 87-110 (SSLR…HFPC), 122-147 (VPTL…SLVS), 150-166 (LSRT…LAGL), 167-190 (HSLR…ALQV), 198-221 (LGNL…LPPS), 223-242 (EYLL…DLAN), 243-268 (LTAL…CMEC), 283-306 (LNHL…WFHA), 308-332 (GNLM…AFQG), 333-356 (LAQL…HLHL), 363-386 (LLSL…TLRS), 390-413 (LPML…IFGA), 415-440 (PGLR…TGEV), 470-494 (CKTL…MFAR), 496-519 (SRLQ…QFMP), 520-543 (LTSL…SFTE), 545-572 (PRLE…SFVA), 574-598 (LPAL…LCSA), 600-622 (LRAL…LYLH), 627-650 (LRSL…TLDN), 652-675 (PKSL…SLVL), 676-699 (LPRL…SLPN), 701-723 (TQLQ…FFAL), 724-747 (ATRL…WFGS), and 749-772 (AGTL…AFVD). Residue asparagine 64 is glycosylated (N-linked (GlcNAc...) asparagine). DNA is bound by residues 72–77 (SNRIHH) and 95–109 (KWNC…MHFP). A disulfide bridge connects residues cysteine 98 and cysteine 110. N-linked (GlcNAc...) asparagine glycosylation is present at asparagine 129. DNA-binding positions include tyrosine 132, arginine 152, and 179-181 (YYK). Residues cysteine 178 and cysteine 184 are joined by a disulfide bond. Asparagine 200 carries N-linked (GlcNAc...) asparagine glycosylation. Tyrosine 208 provides a ligand contact to DNA. Asparagine 210 and asparagine 242 each carry an N-linked (GlcNAc...) asparagine glycan. Intrachain disulfides connect cysteine 255–cysteine 268 and cysteine 258–cysteine 265. The S-palmitoyl cysteine moiety is linked to residue cysteine 258. Arginine 262 contacts DNA. Residue cysteine 265 is the site of S-palmitoyl cysteine attachment. A glycan (N-linked (GlcNAc...) asparagine) is linked at asparagine 340. A disulfide bridge links cysteine 470 with cysteine 500. Residues asparagine 474 and asparagine 513 are each glycosylated (N-linked (GlcNAc...) asparagine). Asparagine 567 is a glycosylation site (N-linked (GlcNAc...) asparagine). N-linked (GlcNAc...) asparagine glycans are attached at residues asparagine 669, asparagine 694, and asparagine 699. A glycan (N-linked (GlcNAc...) asparagine) is linked at asparagine 731. 2 disulfide bridges follow: cysteine 764-cysteine 790 and cysteine 766-cysteine 809. The chain crosses the membrane as a helical span at residues 818–838 (CFGLSLLTVALGLAVPMLHHL). Residues 839 to 1031 (CGWDLWYCFH…NFCRGPTTAE (193 aa)) are Cytoplasmic-facing. The TIR domain occupies 866–1011 (LPYDAFVVFD…SFWAQLGTAL (146 aa)).

It belongs to the Toll-like receptor family. In terms of assembly, monomer and homodimer. Exists as a monomer in the absence of unmethylated cytidine-phosphate-guanosine (CpG) ligand. Proteolytic processing of an insertion loop (Z-loop) is required for homodimerization upon binding to the unmethylated CpG ligand leading to its activation. Interacts with MYD88 via their respective TIR domains. Interacts with BTK. Interacts (via transmembrane domain) with UNC93B1. Interacts with CD300LH; the interaction may promote full activation of TLR9-triggered innate responses. Interacts with CNPY3 and HSP90B1; this interaction is required for proper folding in the endoplasmic reticulum. Interacts with SMPDL3B. Interacts with CD82; this interaction is essential for TLR9-dependent myddosome formation in response to CpG stimulation. Activated by proteolytic cleavage of the flexible loop between repeats LRR14 and LRR15 within the ectodomain. Cleavage requires UNC93B1. Proteolytically processed by first removing the majority of the ectodomain by either asparagine endopeptidase (AEP) or a cathepsin followed by a trimming event that is solely cathepsin mediated and required for optimal receptor signaling. Post-translationally, palmitoylated by ZDHHC3 in the Golgi regulates TLR9 trafficking from the Golgi to endosomes. Depalmitoylation by PPT1 controls the release of TLR9 from UNC93B1 in endosomes.

Its subcellular location is the endoplasmic reticulum membrane. It localises to the endosome. The protein localises to the lysosome. It is found in the cytoplasmic vesicle. The protein resides in the phagosome. Key component of innate and adaptive immunity. TLRs (Toll-like receptors) control host immune response against pathogens through recognition of molecular patterns specific to microorganisms. TLR9 is a nucleotide-sensing TLR which is activated by unmethylated cytidine-phosphate-guanosine (CpG) dinucleotides. Acts via MYD88 and TRAF6, leading to NF-kappa-B activation, cytokine secretion and the inflammatory response. Upon CpG stimulation, induces B-cell proliferation, activation, survival and antibody production. The protein is Toll-like receptor 9 (TLR9) of Felis catus (Cat).